We begin with the raw amino-acid sequence, 646 residues long: NADP-dependent malic enzyme 4, chloroplastic (646 aa).

The N-terminal 74 residues, 1–74, are a transit peptide targeting the chloroplast; that stretch reads MISLTPSLFL…LETSAADIVP (74 aa). The active-site Proton donor is the Y194. R247 provides a ligand contact to NADP(+). Residue K265 is the Proton acceptor of the active site. Positions 337, 338, and 361 each coordinate a divalent metal cation. Residues D361, 390–406, and N502 contribute to the NADP(+) site; that span reads LFLG…ELIA.

The protein belongs to the malic enzymes family. As to quaternary structure, homodimer and homotetramer. The cofactor is Mg(2+). Mn(2+) serves as cofactor. As to expression, expressed in leaves, stems, flowers and roots, mainly in vascular system. In roots, present in the stele, including the vascular tissue and the pericycle, mainly at emerging lateral roots and at root tips.

The protein resides in the plastid. It is found in the chloroplast. It carries out the reaction (S)-malate + NADP(+) = pyruvate + CO2 + NADPH. The catalysed reaction is oxaloacetate + H(+) = pyruvate + CO2. It functions in the pathway photosynthesis; C3 acid pathway. In terms of biological role, the chloroplastic ME isoform decarboxylates malate shuttled from neighboring mesophyll cells. The CO(2) released is then refixed by ribulose-bisphosphate carboxylase. This pathway eliminates the photorespiratory loss of CO(2) that occurs in most plants. This chain is NADP-dependent malic enzyme 4, chloroplastic (NADP-ME4), found in Arabidopsis thaliana (Mouse-ear cress).